Here is a 497-residue protein sequence, read N- to C-terminus: MSGDPGLEALKARVAEVPLGPEIEETGRIATLADGLVEVEGLPGARLGEVVRFAGGAEGLVLTLDPETVQVALLDPGAALGSGTEVRRTGQLLSVPVGQGLLGRVVDPLGRPLDGLPAILPEARLEIERPAPGIVDRDMVAEPVETGLLVVDALFAVGRGQRELIIGERATGKTSLAVDAIVNQAASDIVCFYVAIGQRTTAVRRVIETVREKGAFARTVFVVAPATASPGLRWIAPFAATSMAEWVRDRGGHALIVYDDLTKHAAVHRELALLARQPPGREAYPGDIFYLHARLLERSAKLSAVNGGGSLTALPIAEIEAGNLSAYIPTNLISIADGQIVTSAALFAANQRPAVDIGLSVSRVGGKAQRGALKAVAGRVRLDYAQYLEMKMFSRFGGFGDAALRARLARGERIGALLAQPRTTPLSTPVQVALLAALAEGALDDVPLEDLARLKAALGPVLAADASLGPFRAAPDRLEPETRAALLACVRRAREAP.

An ATP-binding site is contributed by 167–174; sequence GERATGKT.

This sequence belongs to the ATPase alpha/beta chains family. In terms of assembly, F-type ATPases have 2 components, CF(1) - the catalytic core - and CF(0) - the membrane proton channel. CF(1) has five subunits: alpha(3), beta(3), gamma(1), delta(1), epsilon(1). CF(0) has four main subunits: a(1), b(1), b'(1) and c(9-12).

Its subcellular location is the cell inner membrane. It carries out the reaction ATP + H2O + 4 H(+)(in) = ADP + phosphate + 5 H(+)(out). Its function is as follows. Produces ATP from ADP in the presence of a proton gradient across the membrane. The alpha chain is a regulatory subunit. This is ATP synthase subunit alpha 2 from Cereibacter sphaeroides (strain ATCC 17023 / DSM 158 / JCM 6121 / CCUG 31486 / LMG 2827 / NBRC 12203 / NCIMB 8253 / ATH 2.4.1.) (Rhodobacter sphaeroides).